The chain runs to 317 residues: Type II methyltransferase M.NgoBI (317 aa).

In terms of domain architecture, SAM-dependent MTase C5-type spans 2-302 (YKTIDLFSGI…KICSLLFPAR (301 aa)). The active site involves Cys71.

The protein belongs to the class I-like SAM-binding methyltransferase superfamily. C5-methyltransferase family.

It catalyses the reaction a 2'-deoxycytidine in DNA + S-adenosyl-L-methionine = a 5-methyl-2'-deoxycytidine in DNA + S-adenosyl-L-homocysteine + H(+). A methylase, recognizes the double-stranded sequence 5'-RGCGCY-3', methylates C-5 on both strands, and protects the DNA from cleavage by the NgoBI endonuclease. The protein is Type II methyltransferase M.NgoBI (ngoBIM) of Neisseria gonorrhoeae.